A 700-amino-acid chain; its full sequence is Elongation factor G 1 (700 aa).

The tr-type G domain maps to 8-290 (ERYRNIGISA…AVIDYLPSPA (283 aa)). GTP contacts are provided by residues 17 to 24 (AHIDAGKT), 88 to 92 (DTPGH), and 142 to 145 (NKMD).

This sequence belongs to the TRAFAC class translation factor GTPase superfamily. Classic translation factor GTPase family. EF-G/EF-2 subfamily.

The protein localises to the cytoplasm. Functionally, catalyzes the GTP-dependent ribosomal translocation step during translation elongation. During this step, the ribosome changes from the pre-translocational (PRE) to the post-translocational (POST) state as the newly formed A-site-bound peptidyl-tRNA and P-site-bound deacylated tRNA move to the P and E sites, respectively. Catalyzes the coordinated movement of the two tRNA molecules, the mRNA and conformational changes in the ribosome. This Bordetella parapertussis (strain 12822 / ATCC BAA-587 / NCTC 13253) protein is Elongation factor G 1.